A 502-amino-acid polypeptide reads, in one-letter code: Hippocampus abundant transcript-like protein 1 (502 aa).

The segment covering 1–12 (MNAEPPEEKAAS) has biased composition (basic and acidic residues). The tract at residues 1 to 27 (MNAEPPEEKAASEAEAGAMPEKRAGSR) is disordered. Residues 1 to 46 (MNAEPPEEKAASEAEAGAMPEKRAGSRAAGGNSLQGFGRPSVYHAA) lie on the Extracellular side of the membrane. A helical membrane pass occupies residues 47 to 67 (IVIFLEFFAWGLLTTSMLTVL). Over 68–79 (HETFPQHTFLMN) the chain is Cytoplasmic. The chain crosses the membrane as a helical span at residues 80–100 (GLIQGVKGLLSFLSAPLIGAL). Over 101-108 (SDVWGRKP) the chain is Extracellular. Residues 109–129 (FLLGTVFFTCFPIPLMRISPW) form a helical membrane-spanning segment. The Cytoplasmic segment spans residues 130–131 (WY). Residues 132-152 (FAMISISGVFSVTFSVIFAYV) form a helical membrane-spanning segment. The Extracellular portion of the chain corresponds to 153–165 (ADVTQEHERSTAY). The chain crosses the membrane as a helical span at residues 166–186 (GWVSATFAASLVSSPAIGAYL). Residues 187-193 (SASYGDS) are Cytoplasmic-facing. A helical membrane pass occupies residues 194–214 (LVVLVATVVALLDICFILLAV). Residues 215 to 248 (PESLPEKMRPLSWGARISWKQADPFASLKKVGKD) lie on the Extracellular side of the membrane. Residues 249–269 (STILLICITVFLSYLPEAGQY) traverse the membrane as a helical segment. Residues 270-278 (SSFFLYLRQ) lie on the Cytoplasmic side of the membrane. Residues 279 to 299 (VIGFGSIKIAAFIAMVGILSI) traverse the membrane as a helical segment. The Extracellular segment spans residues 300–316 (VAQTVFLTSLMRSLGNK). A helical transmembrane segment spans residues 317-337 (NTVLLGLGFQMFQLAWYGFGS). Position 338 (Gln-338) is a topological domain, cytoplasmic. The helical transmembrane segment at 339-359 (AWMMWAAGIVAAVSSITFPAV) threads the bilayer. Residues 360 to 384 (STLVSQNADSNQQGVAQGIITGIRG) lie on the Extracellular side of the membrane. A helical membrane pass occupies residues 385 to 405 (LCNGLGPALYGFIFYMFHVEL). Topologically, residues 406-425 (TELEPELISNNAALQGAVIP) are cytoplasmic. A helical transmembrane segment spans residues 426–446 (GPPFLFGACIVFMSFLVAVFI). At 447–502 (PEYSKGGIQKHSNSISGSLANTPERGSDEDIEPLLQDSSIWELSSLEEPGHQCTEL) the chain is on the extracellular side.

The protein belongs to the major facilitator superfamily.

The protein localises to the membrane. The polypeptide is Hippocampus abundant transcript-like protein 1 (Bos taurus (Bovine)).